A 237-amino-acid chain; its full sequence is Sugar fermentation stimulation protein homolog (237 aa).

The protein belongs to the SfsA family.

This is Sugar fermentation stimulation protein homolog from Pseudomonas fluorescens (strain ATCC BAA-477 / NRRL B-23932 / Pf-5).